Consider the following 119-residue polypeptide: Amicyanin-alpha (119 aa).

The N-terminal stretch at methionine 1–alanine 20 is a signal peptide. Residues alanine 21–glutamate 119 form the Plastocyanin-like domain. Cu cation-binding residues include histidine 67, cysteine 106, histidine 109, and methionine 112.

The cofactor is Cu cation.

It localises to the periplasm. It functions in the pathway one-carbon metabolism; methylamine degradation. Its function is as follows. Primary acceptor of electrons from methylamine dehydrogenase. Passes those electrons on either a soluble cytochrome c or to pseudoazurin. In Methylorubrum extorquens (strain ATCC 14718 / DSM 1338 / JCM 2805 / NCIMB 9133 / AM1) (Methylobacterium extorquens), this protein is Amicyanin-alpha (mauC).